Reading from the N-terminus, the 292-residue chain is 4-hydroxy-tetrahydrodipicolinate synthase (292 aa).

T45 is a binding site for pyruvate. The active-site Proton donor/acceptor is the Y133. Residue K162 is the Schiff-base intermediate with substrate of the active site. I204 serves as a coordination point for pyruvate.

It belongs to the DapA family. Homotetramer; dimer of dimers.

It is found in the cytoplasm. The enzyme catalyses L-aspartate 4-semialdehyde + pyruvate = (2S,4S)-4-hydroxy-2,3,4,5-tetrahydrodipicolinate + H2O + H(+). It functions in the pathway amino-acid biosynthesis; L-lysine biosynthesis via DAP pathway; (S)-tetrahydrodipicolinate from L-aspartate: step 3/4. Its function is as follows. Catalyzes the condensation of (S)-aspartate-beta-semialdehyde [(S)-ASA] and pyruvate to 4-hydroxy-tetrahydrodipicolinate (HTPA). This is 4-hydroxy-tetrahydrodipicolinate synthase from Oleidesulfovibrio alaskensis (strain ATCC BAA-1058 / DSM 17464 / G20) (Desulfovibrio alaskensis).